Consider the following 160-residue polypeptide: MSIIKKPDLTDPKLRAKLAKGMGHNYYGEPAWPNDLLYLFPVCILGTFACCIGLAVMAPTQMGEPADPFNTPLEILPEWYFFPTFNLLRVLPNKLLGVLAMAAVPAGLITVPFIENVNKFQNPFRRPIASLVFITGFIFAVWFGIGACLPIDKAVSLGYW.

Transmembrane regions (helical) follow at residues 36–56 (LLYLFPVCILGTFACCIGLAV), 95–115 (LLGVLAMAAVPAGLITVPFIE), and 131–151 (LVFITGFIFAVWFGIGACLPI).

Belongs to the cytochrome b family. PetD subfamily. The 4 large subunits of the cytochrome b6-f complex are cytochrome b6, subunit IV (17 kDa polypeptide, petD), cytochrome f and the Rieske protein, while the 4 small subunits are petG, petL, petM and petN. The complex functions as a dimer.

Its subcellular location is the plastid. The protein resides in the chloroplast thylakoid membrane. Its function is as follows. Component of the cytochrome b6-f complex, which mediates electron transfer between photosystem II (PSII) and photosystem I (PSI), cyclic electron flow around PSI, and state transitions. In Thalassiosira pseudonana (Marine diatom), this protein is Cytochrome b6-f complex subunit 4.